Consider the following 704-residue polypeptide: MEFVATCMPGLADLLSDELGSLGISVTETGRAHVSFSGGVADALKVCLWSRLSERVLLHLATLGVTPDIAPEKLAASQDWLSLVGNNAPVHLHIEHGAEVRGDNRISAKRFIHALPEQFAISREPKGSCCIRARLDLNEAHLWLDLAGEPLHRRGYRLAGGRAPLRETLAAAILWAVGWGKEGRHSALIDPFCGSGTLVIEAALIAAGRAAGAQRQHYGFQQWRGCRRQLWLDAQKEAGESGKRPVPAVSLKGFDSEASTLQLALQNAERAGVRNAIHFERRELGALRRRDFVDNGIVVGNPPWGERLEEKPQAGWLHYALGRILSVRAPGYQALLLGADAEVMDRSGMNLEQQWRLKNGPFNNFIRLYSPRKQTPANVVKVADDSAFNVPEGAQPLLNRLRKNGKHLRRWLEREDIQCYRLYDRDLPEFNVAVDIYADQVLVQEFKAPKTIDPEKAKERRDWAVTAVRAALGVHREQVHLRTREKQKGNQQYQKLDAQGQYRVVREGQSQLLINLQDYLDTGLFLDHRPTRLRIAEEASGKRFLNLFAYTGSATVHAAVGGAKRTVTVDSSKRYLDWAACNLAANGFSTDQHELARADTMRWLDECKEQFDLVFCDPPTFSNNKSRSDFVVEEHHGDLIRKIMRCLEPGGVLYFSCNYRRFQMDESISKWYAVEDISRWSIPEDFRRNEKIHYCYAIRHVEDA.

The protein belongs to the methyltransferase superfamily. RlmKL family.

The protein localises to the cytoplasm. The catalysed reaction is guanosine(2445) in 23S rRNA + S-adenosyl-L-methionine = N(2)-methylguanosine(2445) in 23S rRNA + S-adenosyl-L-homocysteine + H(+). It carries out the reaction guanosine(2069) in 23S rRNA + S-adenosyl-L-methionine = N(2)-methylguanosine(2069) in 23S rRNA + S-adenosyl-L-homocysteine + H(+). Functionally, specifically methylates the guanine in position 2445 (m2G2445) and the guanine in position 2069 (m7G2069) of 23S rRNA. In Alcanivorax borkumensis (strain ATCC 700651 / DSM 11573 / NCIMB 13689 / SK2), this protein is Ribosomal RNA large subunit methyltransferase K/L.